Reading from the N-terminus, the 276-residue chain is Outer plastidial membrane protein porin (276 aa).

It belongs to the eukaryotic mitochondrial porin (TC 1.B.8.1) family.

The protein resides in the plastid outer membrane. Functionally, forms a channel through the cell membrane that allows diffusion of small hydrophilic molecules. The channel adopts an open conformation at low or zero membrane potential and a closed conformation at potentials above 30-40 mV. The open state has a weak anion selectivity whereas the closed state is cation-selective. In Pisum sativum (Garden pea), this protein is Outer plastidial membrane protein porin (POR1).